Consider the following 210-residue polypeptide: Uracil phosphoribosyltransferase (210 aa).

Residues R78, R103, and 130–138 each bind 5-phospho-alpha-D-ribose 1-diphosphate; that span reads DPMLATGGT. Residues I193 and 198-200 contribute to the uracil site; that span reads GDA. D199 contributes to the 5-phospho-alpha-D-ribose 1-diphosphate binding site.

It belongs to the UPRTase family. Requires Mg(2+) as cofactor.

It carries out the reaction UMP + diphosphate = 5-phospho-alpha-D-ribose 1-diphosphate + uracil. Its pathway is pyrimidine metabolism; UMP biosynthesis via salvage pathway; UMP from uracil: step 1/1. Allosterically activated by GTP. Functionally, catalyzes the conversion of uracil and 5-phospho-alpha-D-ribose 1-diphosphate (PRPP) to UMP and diphosphate. The protein is Uracil phosphoribosyltransferase of Stenotrophomonas maltophilia (strain K279a).